We begin with the raw amino-acid sequence, 102 residues long: NADH-quinone oxidoreductase subunit K (102 aa).

Helical transmembrane passes span 6–26, 30–50, and 64–84; these read LGQGLLLAAILFALGLVGVLV, LLFMLMSLEVMLNAAGVAFIV, and FILVLTLAAAEVSVGLALILL.

It belongs to the complex I subunit 4L family. In terms of assembly, NDH-1 is composed of 14 different subunits. Subunits NuoA, H, J, K, L, M, N constitute the membrane sector of the complex.

Its subcellular location is the cell inner membrane. It carries out the reaction a quinone + NADH + 5 H(+)(in) = a quinol + NAD(+) + 4 H(+)(out). Functionally, NDH-1 shuttles electrons from NADH, via FMN and iron-sulfur (Fe-S) centers, to quinones in the respiratory chain. The immediate electron acceptor for the enzyme in this species is believed to be ubiquinone. Couples the redox reaction to proton translocation (for every two electrons transferred, four hydrogen ions are translocated across the cytoplasmic membrane), and thus conserves the redox energy in a proton gradient. The protein is NADH-quinone oxidoreductase subunit K of Acidiphilium cryptum (strain JF-5).